The following is a 715-amino-acid chain: Glycine--tRNA ligase beta subunit (715 aa).

Belongs to the class-II aminoacyl-tRNA synthetase family. In terms of assembly, tetramer of two alpha and two beta subunits.

The protein localises to the cytoplasm. The catalysed reaction is tRNA(Gly) + glycine + ATP = glycyl-tRNA(Gly) + AMP + diphosphate. The protein is Glycine--tRNA ligase beta subunit of Nitrosomonas europaea (strain ATCC 19718 / CIP 103999 / KCTC 2705 / NBRC 14298).